The primary structure comprises 357 residues: CD4+ T-cell-stimulating antigen (357 aa).

The N-terminal stretch at 1–22 (MKKRTFALALSMIIASGVVLGA) is a signal peptide. C23 carries N-palmitoyl cysteine lipidation. C23 is lipidated: S-diacylglycerol cysteine.

It belongs to the BMP lipoprotein family.

Its subcellular location is the cell membrane. The polypeptide is CD4+ T-cell-stimulating antigen (tcsA) (Listeria innocua serovar 6a (strain ATCC BAA-680 / CLIP 11262)).